The sequence spans 458 residues: GTPase Der (458 aa).

EngA-type G domains are found at residues 9 to 171 (KTIA…DLNQ) and 197 to 368 (IQVG…ECFS). GTP is bound by residues 15–22 (GQPNVGKS), 62–66 (DTGGM), 123–126 (NKID), 203–210 (GRVNVGKS), 250–254 (DTAGI), and 314–317 (NKWD). The 85-residue stretch at 369-453 (KRIPTSLLNS…PLILNAKDKK (85 aa)) folds into the KH-like domain.

It belongs to the TRAFAC class TrmE-Era-EngA-EngB-Septin-like GTPase superfamily. EngA (Der) GTPase family. In terms of assembly, associates with the 50S ribosomal subunit.

In terms of biological role, GTPase that plays an essential role in the late steps of ribosome biogenesis. This Helicobacter pylori (strain ATCC 700392 / 26695) (Campylobacter pylori) protein is GTPase Der.